Reading from the N-terminus, the 79-residue chain is Acyl carrier protein (79 aa).

The Carrier domain maps to 2–77 (SDVLERVRKI…DAVKFIQERL (76 aa)). Ser-37 bears the O-(pantetheine 4'-phosphoryl)serine mark.

This sequence belongs to the acyl carrier protein (ACP) family. 4'-phosphopantetheine is transferred from CoA to a specific serine of apo-ACP by AcpS. This modification is essential for activity because fatty acids are bound in thioester linkage to the sulfhydryl of the prosthetic group.

The protein localises to the cytoplasm. Its pathway is lipid metabolism; fatty acid biosynthesis. In terms of biological role, carrier of the growing fatty acid chain in fatty acid biosynthesis. The chain is Acyl carrier protein from Phenylobacterium zucineum (strain HLK1).